Here is a 154-residue protein sequence, read N- to C-terminus: Troponin C, isoform 1 (154 aa).

EF-hand domains lie at 8-43, 44-79, 84-119, and 120-154; these read EQTA…LGHQ, LDDA…FLVE, AMMA…LDDK, and LTND…GGDD. Ca(2+) is bound by residues aspartate 57, aspartate 59, serine 61, glutamine 63, and glutamate 68. Ca(2+) contacts are provided by aspartate 133, aspartate 135, serine 137, threonine 139, and glutamate 144.

The protein belongs to the troponin C family. Present only in adult muscles.

The protein is Troponin C, isoform 1 (TpnC41C) of Drosophila melanogaster (Fruit fly).